We begin with the raw amino-acid sequence, 1078 residues long: Transmembrane protein 132B (1078 aa).

Residues 1-903 (MFGAASRMDT…LTDLEIGMYA (903 aa)) are Extracellular-facing. N-linked (GlcNAc...) asparagine glycans are attached at residues N343, N366, and N381. The interval 834-887 (RGTPVGQEESTNKSTTPQSPMEGKNKLLKSGGPDAFTSFPTQGKSPDPNNPSDL) is disordered. Over residues 841 to 852 (EESTNKSTTPQS) the composition is skewed to polar residues. A helical membrane pass occupies residues 904–924 (LLCVFCLAILVFLINCVAFAW). At 925-1078 (KYRHKRFAVS…DYMESLQDQM (154 aa)) the chain is on the cytoplasmic side.

It belongs to the TMEM132 family.

The protein localises to the membrane. In Homo sapiens (Human), this protein is Transmembrane protein 132B (TMEM132B).